Consider the following 161-residue polypeptide: Nucleotide-binding protein Bphy_0527 (161 aa).

It belongs to the YajQ family.

Its function is as follows. Nucleotide-binding protein. This is Nucleotide-binding protein Bphy_0527 from Paraburkholderia phymatum (strain DSM 17167 / CIP 108236 / LMG 21445 / STM815) (Burkholderia phymatum).